The chain runs to 92 residues: uncharacterized protein (92 aa).

To M.jannaschii MJ0782.1.

This is an uncharacterized protein from Methanothermobacter thermautotrophicus (strain ATCC 29096 / DSM 1053 / JCM 10044 / NBRC 100330 / Delta H) (Methanobacterium thermoautotrophicum).